The sequence spans 214 residues: Phosphatidylserine decarboxylase proenzyme (214 aa).

Catalysis depends on Ser-182, which acts as the Schiff-base intermediate with substrate; via pyruvic acid. Ser-182 carries the post-translational modification Pyruvic acid (Ser); by autocatalysis.

It belongs to the phosphatidylserine decarboxylase family. PSD-A subfamily. In terms of assembly, heterodimer of a large membrane-associated beta subunit and a small pyruvoyl-containing alpha subunit. Requires pyruvate as cofactor. In terms of processing, is synthesized initially as an inactive proenzyme. Formation of the active enzyme involves a self-maturation process in which the active site pyruvoyl group is generated from an internal serine residue via an autocatalytic post-translational modification. Two non-identical subunits are generated from the proenzyme in this reaction, and the pyruvate is formed at the N-terminus of the alpha chain, which is derived from the carboxyl end of the proenzyme. The post-translation cleavage follows an unusual pathway, termed non-hydrolytic serinolysis, in which the side chain hydroxyl group of the serine supplies its oxygen atom to form the C-terminus of the beta chain, while the remainder of the serine residue undergoes an oxidative deamination to produce ammonia and the pyruvoyl prosthetic group on the alpha chain.

It is found in the cell membrane. It catalyses the reaction a 1,2-diacyl-sn-glycero-3-phospho-L-serine + H(+) = a 1,2-diacyl-sn-glycero-3-phosphoethanolamine + CO2. It participates in phospholipid metabolism; phosphatidylethanolamine biosynthesis; phosphatidylethanolamine from CDP-diacylglycerol: step 2/2. Its function is as follows. Catalyzes the formation of phosphatidylethanolamine (PtdEtn) from phosphatidylserine (PtdSer). The chain is Phosphatidylserine decarboxylase proenzyme from Burkholderia cenocepacia (strain HI2424).